A 360-amino-acid polypeptide reads, in one-letter code: Phospho-N-acetylmuramoyl-pentapeptide-transferase (360 aa).

10 consecutive transmembrane segments (helical) span residues 26–46 (TILG…AVIQ), 70–90 (GTPT…TLLW), 97–117 (YVWV…VDDY), 132–152 (AKFF…FSTA), 168–188 (VVLP…VGSS), 199–219 (GLAI…AYAT), 236–256 (AGEV…FLWF), 263–283 (VFMG…LAVV), 288–308 (LVLL…MLQV), and 338–358 (VIVR…AMLK).

This sequence belongs to the glycosyltransferase 4 family. MraY subfamily. Mg(2+) is required as a cofactor.

The protein localises to the cell inner membrane. It catalyses the reaction UDP-N-acetyl-alpha-D-muramoyl-L-alanyl-gamma-D-glutamyl-meso-2,6-diaminopimeloyl-D-alanyl-D-alanine + di-trans,octa-cis-undecaprenyl phosphate = di-trans,octa-cis-undecaprenyl diphospho-N-acetyl-alpha-D-muramoyl-L-alanyl-D-glutamyl-meso-2,6-diaminopimeloyl-D-alanyl-D-alanine + UMP. Its pathway is cell wall biogenesis; peptidoglycan biosynthesis. Its function is as follows. Catalyzes the initial step of the lipid cycle reactions in the biosynthesis of the cell wall peptidoglycan: transfers peptidoglycan precursor phospho-MurNAc-pentapeptide from UDP-MurNAc-pentapeptide onto the lipid carrier undecaprenyl phosphate, yielding undecaprenyl-pyrophosphoryl-MurNAc-pentapeptide, known as lipid I. The protein is Phospho-N-acetylmuramoyl-pentapeptide-transferase of Alkalilimnicola ehrlichii (strain ATCC BAA-1101 / DSM 17681 / MLHE-1).